A 22-amino-acid chain; its full sequence is Heliocin (22 aa).

Glutamine 1 is modified (pyrrolidone carboxylic acid). The interval 1–22 (QRFIHPTYRPPPQPRRPVIMRA) is disordered. An O-linked (GalNAc...) threonine glycan is attached at threonine 7.

Monomer. In terms of tissue distribution, hemolymph.

The protein resides in the secreted. Its function is as follows. Has antibacterial activity, preferentially against Gram-negative bacteria. This Heliothis virescens (Tobacco budworm moth) protein is Heliocin.